Consider the following 236-residue polypeptide: Small ribosomal subunit protein mS41 (236 aa).

Belongs to the mitochondrion-specific ribosomal protein mS41 family. In terms of assembly, component of the mitochondrial small ribosomal subunit (mt-SSU). Mature N.crassa 74S mitochondrial ribosomes consist of a small (37S) and a large (54S) subunit. The 37S small subunit contains a 16S ribosomal RNA (16S mt-rRNA) and 32 different proteins. The 54S large subunit contains a 23S rRNA (23S mt-rRNA) and 42 different proteins.

The protein localises to the mitochondrion. Its function is as follows. Component of the mitochondrial ribosome (mitoribosome), a dedicated translation machinery responsible for the synthesis of mitochondrial genome-encoded proteins, including at least some of the essential transmembrane subunits of the mitochondrial respiratory chain. The mitoribosomes are attached to the mitochondrial inner membrane and translation products are cotranslationally integrated into the membrane. The chain is Small ribosomal subunit protein mS41 (fyv4) from Neurospora crassa (strain ATCC 24698 / 74-OR23-1A / CBS 708.71 / DSM 1257 / FGSC 987).